A 474-amino-acid chain; its full sequence is Cysteine--tRNA ligase (474 aa).

C30 lines the Zn(2+) pocket. Positions 32-42 match the 'HIGH' region motif; sequence PTVYNYAHIGN. 3 residues coordinate Zn(2+): C215, H240, and E244. A 'KMSKS' region motif is present at residues 272 to 276; that stretch reads KMSKS. K275 lines the ATP pocket.

This sequence belongs to the class-I aminoacyl-tRNA synthetase family. In terms of assembly, monomer. Zn(2+) is required as a cofactor.

It is found in the cytoplasm. The enzyme catalyses tRNA(Cys) + L-cysteine + ATP = L-cysteinyl-tRNA(Cys) + AMP + diphosphate. In Brachyspira hyodysenteriae (strain ATCC 49526 / WA1), this protein is Cysteine--tRNA ligase.